The primary structure comprises 165 residues: Xanthine-guanine phosphoribosyltransferase (165 aa).

5-phospho-alpha-D-ribose 1-diphosphate contacts are provided by residues 41-42 (RG) and 98-106 (DDLTDTGKT). Aspartate 99 contacts Mg(2+). Guanine-binding residues include aspartate 102 and isoleucine 145. 2 residues coordinate xanthine: aspartate 102 and isoleucine 145. GMP contacts are provided by residues 102–106 (DTGKT) and 144–145 (WI).

The protein belongs to the purine/pyrimidine phosphoribosyltransferase family. XGPT subfamily. Homotetramer. The cofactor is Mg(2+).

It localises to the cell inner membrane. It carries out the reaction GMP + diphosphate = guanine + 5-phospho-alpha-D-ribose 1-diphosphate. The enzyme catalyses XMP + diphosphate = xanthine + 5-phospho-alpha-D-ribose 1-diphosphate. It catalyses the reaction IMP + diphosphate = hypoxanthine + 5-phospho-alpha-D-ribose 1-diphosphate. It functions in the pathway purine metabolism; GMP biosynthesis via salvage pathway; GMP from guanine: step 1/1. Its pathway is purine metabolism; XMP biosynthesis via salvage pathway; XMP from xanthine: step 1/1. Functionally, purine salvage pathway enzyme that catalyzes the transfer of the ribosyl-5-phosphate group from 5-phospho-alpha-D-ribose 1-diphosphate (PRPP) to the N9 position of the 6-oxopurines guanine and xanthine to form the corresponding ribonucleotides GMP (guanosine 5'-monophosphate) and XMP (xanthosine 5'-monophosphate), with the release of PPi. To a lesser extent, also acts on hypoxanthine. This is Xanthine-guanine phosphoribosyltransferase from Agrobacterium fabrum (strain C58 / ATCC 33970) (Agrobacterium tumefaciens (strain C58)).